A 182-amino-acid chain; its full sequence is UPF0316 protein Sde_0566 (182 aa).

A run of 3 helical transmembrane segments spans residues 7–27 (VAPE…VSLG), 41–61 (LAAF…GQVF), and 67–87 (WYLA…GMWI).

Belongs to the UPF0316 family.

It is found in the cell membrane. The protein is UPF0316 protein Sde_0566 of Saccharophagus degradans (strain 2-40 / ATCC 43961 / DSM 17024).